The sequence spans 309 residues: N(5)-(carboxyethyl)ornithine synthase (309 aa).

The pyruvate site is built by R15, K71, and H92. 171–176 serves as a coordination point for NADP(+); the sequence is GSGNVA.

This sequence belongs to the AlaDH/PNT family. CEOS subfamily. As to quaternary structure, homotetramer.

The enzyme catalyses N(5)-[1(S)-1-carboxyethyl]-L-ornithine + NADP(+) + H2O = L-ornithine + pyruvate + NADPH + H(+). Its function is as follows. Catalyzes the NADPH-dependent reductive condensation between pyruvic acid and the side chain amino group of L-ornithine to form N(5)-(L-1-carboxyethyl)-L-ornithine. To a lesser extent, can also use L-lysine as substrate (yielding N(6)-(L-1-carboxyethyl)-L-lysine). This chain is N(5)-(carboxyethyl)ornithine synthase (ceo), found in Lactococcus lactis subsp. lactis (strain IL1403) (Streptococcus lactis).